Reading from the N-terminus, the 269-residue chain is Ribosomal RNA small subunit methyltransferase A (269 aa).

S-adenosyl-L-methionine-binding residues include Asn18, Leu20, Gly45, Glu66, Asp91, and Asn112.

Belongs to the class I-like SAM-binding methyltransferase superfamily. rRNA adenine N(6)-methyltransferase family. RsmA subfamily.

The protein localises to the cytoplasm. It catalyses the reaction adenosine(1518)/adenosine(1519) in 16S rRNA + 4 S-adenosyl-L-methionine = N(6)-dimethyladenosine(1518)/N(6)-dimethyladenosine(1519) in 16S rRNA + 4 S-adenosyl-L-homocysteine + 4 H(+). Specifically dimethylates two adjacent adenosines (A1518 and A1519) in the loop of a conserved hairpin near the 3'-end of 16S rRNA in the 30S particle. May play a critical role in biogenesis of 30S subunits. The chain is Ribosomal RNA small subunit methyltransferase A from Vibrio parahaemolyticus serotype O3:K6 (strain RIMD 2210633).